Consider the following 367-residue polypeptide: Molybdenum import ATP-binding protein ModC (367 aa).

Residues 1–234 (MSSAALEVRL…PALSGGFGHE (234 aa)) enclose the ABC transporter domain. 33–40 (GPSGAGKS) contributes to the ATP binding site. Positions 293 to 366 (HISLHNILPV…IKSVAVDVLG (74 aa)) constitute a Mop domain.

It belongs to the ABC transporter superfamily. Molybdate importer (TC 3.A.1.8) family. In terms of assembly, the complex is composed of two ATP-binding proteins (ModC), two transmembrane proteins (ModB) and a solute-binding protein (ModA).

It localises to the cell inner membrane. The enzyme catalyses molybdate(out) + ATP + H2O = molybdate(in) + ADP + phosphate + H(+). Part of the ABC transporter complex ModABC involved in molybdenum import. Responsible for energy coupling to the transport system. The polypeptide is Molybdenum import ATP-binding protein ModC (Granulibacter bethesdensis (strain ATCC BAA-1260 / CGDNIH1)).